A 273-amino-acid polypeptide reads, in one-letter code: Phosphate import ATP-binding protein PstB (273 aa).

The ABC transporter domain occupies 27–268; it reads VTVRDLNFYY…PSDRRTQDYI (242 aa). 59–66 contacts ATP; sequence GPSGCGKS.

The protein belongs to the ABC transporter superfamily. Phosphate importer (TC 3.A.1.7) family. In terms of assembly, the complex is composed of two ATP-binding proteins (PstB), two transmembrane proteins (PstC and PstA) and a solute-binding protein (PstS).

It localises to the cell inner membrane. The enzyme catalyses phosphate(out) + ATP + H2O = ADP + 2 phosphate(in) + H(+). Its function is as follows. Part of the ABC transporter complex PstSACB involved in phosphate import. Responsible for energy coupling to the transport system. The sequence is that of Phosphate import ATP-binding protein PstB from Rhodopseudomonas palustris (strain ATCC BAA-98 / CGA009).